Reading from the N-terminus, the 167-residue chain is Small ribosomal subunit protein uS9 (167 aa).

A disordered region spans residues 136-167 (KRAGFLTRDPRATERKKYGLKKARKAPQYSKR). The span at 143–152 (RDPRATERKK) shows a compositional bias: basic and acidic residues. The segment covering 153-167 (YGLKKARKAPQYSKR) has biased composition (basic residues).

It belongs to the universal ribosomal protein uS9 family.

The protein is Small ribosomal subunit protein uS9 of Nocardia farcinica (strain IFM 10152).